Reading from the N-terminus, the 374-residue chain is Multicilin (374 aa).

2 disordered regions span residues 18–72 (CPNR…ALPA) and 84–105 (CSSF…QSHS). The stretch at 168-216 (EQYWKEVADQNQRALGDALIENNQLHATLTQKQEEIASLKERNLQLKEL) forms a coiled coil. The segment at 284–306 (LQSRDPKRLRLQPEPQSLDRRPG) is disordered.

The protein belongs to the geminin family. Heterodimer (via coiled-coil domain) with GMNN (via coiled-coil domain); targets GMNN to the nucleus. Can form homodimers (in vitro, via coiled-coil domain), but these are much less stable than the heterodimer formed with GMNN.

Its subcellular location is the nucleus. Its function is as follows. Transcription regulator specifically required for multiciliate cell differentiation. Acts in a multiprotein complex containing E2F4 and E2F5 that binds and activates genes required for centriole biogenesis. Required for the deuterosome-mediated acentriolar pathway. Plays a role in mitotic cell cycle progression by promoting cell cycle exit. Modulates GMNN activity by reducing its affinity for CDT1. This is Multicilin (MCIDAS) from Bos taurus (Bovine).